The following is an 834-amino-acid chain: Ras GTPase-activating protein 3 (834 aa).

2 consecutive C2 domains span residues 1-112 (MAVE…DTWF) and 123-263 (VQGK…EAWY). At alanine 2 the chain carries N-acetylalanine. At tyrosine 66 the chain carries Phosphotyrosine. Serine 77 carries the post-translational modification Phosphoserine. Residue threonine 110 is modified to Phosphothreonine. Residues 346-561 (GRVVPFISAI…DAVKNFLDLI (216 aa)) enclose the Ras-GAP domain. The region spanning 576–677 (ILLKEGFMIK…WIDILTKVSQ (102 aa)) is the PH domain. The Btk-type zinc finger occupies 679-715 (NQKRLTVFHPSAYLNGHWLCCRASSDTAIGCTPCTGG). Zn(2+)-binding residues include histidine 687, cysteine 698, cysteine 699, and cysteine 709. 2 positions are modified to phosphoserine: serine 809 and serine 833.

In terms of biological role, inhibitory regulator of the Ras-cyclic AMP pathway. Binds inositol tetrakisphosphate (IP4). The chain is Ras GTPase-activating protein 3 (Rasa3) from Rattus norvegicus (Rat).